The chain runs to 230 residues: Large ribosomal subunit protein uL1 (230 aa).

It belongs to the universal ribosomal protein uL1 family. Part of the 50S ribosomal subunit.

Functionally, binds directly to 23S rRNA. The L1 stalk is quite mobile in the ribosome, and is involved in E site tRNA release. Protein L1 is also a translational repressor protein, it controls the translation of the L11 operon by binding to its mRNA. The protein is Large ribosomal subunit protein uL1 of Chromohalobacter salexigens (strain ATCC BAA-138 / DSM 3043 / CIP 106854 / NCIMB 13768 / 1H11).